The chain runs to 511 residues: Early growth response protein 1 (511 aa).

Disordered stretches follow at residues 133-169 (ASIP…LSCS) and 291-312 (PSRM…RPYA). Over residues 137–169 (SSTSQATHPSSSSTSSIPSSSSSSTSSASLSCS) the composition is skewed to low complexity. 3 consecutive C2H2-type zinc fingers follow at residues 311–335 (YACP…IRIH), 341–363 (FQCR…IRTH), and 369–391 (FACE…TKIH). The tract at residues 384 to 406 (RKRHTKIHMRQKDKKAEKGATAA) is disordered. Over residues 386–396 (RHTKIHMRQKD) the composition is skewed to basic residues.

This sequence belongs to the EGR C2H2-type zinc-finger protein family. In terms of tissue distribution, detected in muscle and brain.

Its subcellular location is the nucleus. It localises to the cytoplasm. Functionally, transcriptional regulator. Recognizes and binds to the DNA sequence 5'-GCG(T/G)GGGCG-3'(EGR-site) in the promoter region of target genes. Binds double-stranded target DNA, irrespective of the cytosine methylation status. Regulates the transcription of numerous target genes, and thereby plays an important role in regulating the response to growth factors, DNA damage, and ischemia. Plays a role in the regulation of cell survival, proliferation and cell death. Mediates responses to ischemia and hypoxia; regulates the expression of proteins that are involved in inflammatory processes. Plays a role in regulating the expression of circadian clock genes. Plays a role in the organization of Muller glia cells in the inner and outer plexiform layers of the retina. This is Early growth response protein 1 (egr1) from Danio rerio (Zebrafish).